Reading from the N-terminus, the 635-residue chain is Chaperone protein DnaK (635 aa).

Threonine 198 carries the post-translational modification Phosphothreonine; by autocatalysis. Residues 606 to 635 are disordered; it reads QATAASPGAEAPKADDDVVDAEFSEVDENK. A compositionally biased stretch (acidic residues) spans 622–635; the sequence is DVVDAEFSEVDENK.

The protein belongs to the heat shock protein 70 family.

Functionally, acts as a chaperone. This Novosphingobium aromaticivorans (strain ATCC 700278 / DSM 12444 / CCUG 56034 / CIP 105152 / NBRC 16084 / F199) protein is Chaperone protein DnaK.